The sequence spans 197 residues: uncharacterized protein (197 aa).

This is an uncharacterized protein from Methanothermobacter thermautotrophicus (Methanobacterium thermoformicicum).